The following is a 267-amino-acid chain: Translation initiation factor 2 subunit alpha (267 aa).

One can recognise an S1 motif domain in the interval 17-88; the sequence is GEIVIGTVKR…KRGHIDLSIK (72 aa).

The protein belongs to the eIF-2-alpha family. Heterotrimer composed of an alpha, a beta and a gamma chain.

In terms of biological role, eIF-2 functions in the early steps of protein synthesis by forming a ternary complex with GTP and initiator tRNA. The polypeptide is Translation initiation factor 2 subunit alpha (eif2a) (Archaeoglobus fulgidus (strain ATCC 49558 / DSM 4304 / JCM 9628 / NBRC 100126 / VC-16)).